A 238-amino-acid polypeptide reads, in one-letter code: Purine nucleoside phosphorylase DeoD-type (238 aa).

Position 4 (histidine 4) interacts with a purine D-ribonucleoside. Phosphate contacts are provided by residues glycine 20, arginine 24, arginine 43, and 87–90 (RVGS). Residues 179-181 (EME) and 203-204 (SD) each bind a purine D-ribonucleoside. Aspartate 204 serves as the catalytic Proton donor.

Belongs to the PNP/UDP phosphorylase family. As to quaternary structure, homohexamer; trimer of homodimers.

The catalysed reaction is a purine D-ribonucleoside + phosphate = a purine nucleobase + alpha-D-ribose 1-phosphate. It carries out the reaction a purine 2'-deoxy-D-ribonucleoside + phosphate = a purine nucleobase + 2-deoxy-alpha-D-ribose 1-phosphate. Functionally, catalyzes the reversible phosphorolytic breakdown of the N-glycosidic bond in the beta-(deoxy)ribonucleoside molecules, with the formation of the corresponding free purine bases and pentose-1-phosphate. This is Purine nucleoside phosphorylase DeoD-type from Pasteurella multocida (strain Pm70).